The primary structure comprises 391 residues: Cytochrome P450 165A3 (391 aa).

Residues 1–22 are disordered; it reads MFEEKNALRGTEIHRRERFDPG. A heme-binding site is contributed by C342.

The protein belongs to the cytochrome P450 family. The cofactor is heme.

It participates in antibiotic biosynthesis; vancomycin biosynthesis. Functionally, involved in the coupling of aromatic side chains of the heptapeptide of vancomycin. The protein is Cytochrome P450 165A3 (cyp165A3) of Amycolatopsis orientalis (Nocardia orientalis).